Reading from the N-terminus, the 145-residue chain is Large ribosomal subunit protein uL15 (145 aa).

A disordered region spans residues 1–57 (MKLNDLSPAPGSRREKHRPGRGIGSGLGKTGGRGHKGQTSRSGGTIAPGFEGGQQPL). A compositionally biased stretch (gly residues) spans 21–31 (RGIGSGLGKTG).

This sequence belongs to the universal ribosomal protein uL15 family. As to quaternary structure, part of the 50S ribosomal subunit.

Binds to the 23S rRNA. In Pseudomonas fluorescens (strain SBW25), this protein is Large ribosomal subunit protein uL15.